Reading from the N-terminus, the 500-residue chain is Cytochrome P450 2C11 (500 aa).

Residue cysteine 435 coordinates heme.

The protein belongs to the cytochrome P450 family. Heme is required as a cofactor. Liver and kidney; male-specific.

The protein resides in the endoplasmic reticulum membrane. It is found in the microsome membrane. The enzyme catalyses an organic molecule + reduced [NADPH--hemoprotein reductase] + O2 = an alcohol + oxidized [NADPH--hemoprotein reductase] + H2O + H(+). It catalyses the reaction testosterone + reduced [NADPH--hemoprotein reductase] + O2 = 2alpha,17beta-dihydroxyandrost-4-en-3-one + oxidized [NADPH--hemoprotein reductase] + H2O + H(+). It carries out the reaction testosterone + reduced [NADPH--hemoprotein reductase] + O2 = 16alpha,17beta-dihydroxyandrost-4-en-3-one + oxidized [NADPH--hemoprotein reductase] + H2O + H(+). The catalysed reaction is (5Z,8Z,11Z,14Z)-eicosatetraenoate + reduced [NADPH--hemoprotein reductase] + O2 = (8R,9S)-epoxy-(5Z,11Z,14Z)-eicosatrienoate + oxidized [NADPH--hemoprotein reductase] + H2O + H(+). The enzyme catalyses (5Z,8Z,11Z,14Z)-eicosatetraenoate + reduced [NADPH--hemoprotein reductase] + O2 = (8S,9R)-epoxy-(5Z,11Z,14Z)-eicosatrienoate + oxidized [NADPH--hemoprotein reductase] + H2O + H(+). It catalyses the reaction (5Z,8Z,11Z,14Z)-eicosatetraenoate + reduced [NADPH--hemoprotein reductase] + O2 = (11R,12S)-epoxy-(5Z,8Z,14Z)-eicosatrienoate + oxidized [NADPH--hemoprotein reductase] + H2O + H(+). It carries out the reaction (5Z,8Z,11Z,14Z)-eicosatetraenoate + reduced [NADPH--hemoprotein reductase] + O2 = (11S,12R)-epoxy-(5Z,8Z,14Z)-eicosatrienoate + oxidized [NADPH--hemoprotein reductase] + H2O + H(+). The catalysed reaction is (5Z,8Z,11Z,14Z)-eicosatetraenoate + reduced [NADPH--hemoprotein reductase] + O2 = (14R,15S)-epoxy-(5Z,8Z,11Z)-eicosatrienoate + oxidized [NADPH--hemoprotein reductase] + H2O + H(+). The enzyme catalyses (5Z,8Z,11Z,14Z)-eicosatetraenoate + reduced [NADPH--hemoprotein reductase] + O2 = (14S,15R)-epoxy-(5Z,8Z,11Z)-eicosatrienoate + oxidized [NADPH--hemoprotein reductase] + H2O + H(+). It catalyses the reaction (5Z,8Z,11Z,14Z,17Z)-eicosapentaenoate + reduced [NADPH--hemoprotein reductase] + O2 = 8,9-epoxy-(5Z,11Z,14Z,17Z)-eicosatetraenoate + oxidized [NADPH--hemoprotein reductase] + H2O + H(+). It carries out the reaction (5Z,8Z,11Z,14Z,17Z)-eicosapentaenoate + reduced [NADPH--hemoprotein reductase] + O2 = 11,12-epoxy-(5Z,8Z,14Z,17Z)-eicosatetraenoate + oxidized [NADPH--hemoprotein reductase] + H2O + H(+). The catalysed reaction is (5Z,8Z,11Z,14Z,17Z)-eicosapentaenoate + reduced [NADPH--hemoprotein reductase] + O2 = 14,15-epoxy-(5Z,8Z,11Z,17Z)-eicosatetraenoate + oxidized [NADPH--hemoprotein reductase] + H2O + H(+). The enzyme catalyses (5Z,8Z,11Z,14Z,17Z)-eicosapentaenoate + reduced [NADPH--hemoprotein reductase] + O2 = (17S,18R)-epoxy-(5Z,8Z,11Z,14Z)-eicosatetraenoate + oxidized [NADPH--hemoprotein reductase] + H2O + H(+). It catalyses the reaction (5Z,8Z,11Z,14Z,17Z)-eicosapentaenoate + reduced [NADPH--hemoprotein reductase] + O2 = (17R,18S)-epoxy-(5Z,8Z,11Z,14Z)-eicosatetraenoate + oxidized [NADPH--hemoprotein reductase] + H2O + H(+). It participates in lipid metabolism; arachidonate metabolism. It functions in the pathway steroid metabolism. A cytochrome P450 monooxygenase involved in the metabolism of steroid hormones and fatty acids. Catalyzes the hydroxylation of carbon-hydrogen bonds. Metabolizes testosterone to 2alpha- and 16alpha-hydroxytestosterone. Catalyzes the epoxidation of double bonds of polyunsaturated fatty acids (PUFAs). Converts arachidonic acid (ARA, C20:4(n-6)) primarily to epoxyeicosatrienoic acid (EET) regioisomers, 8,9-, 11,12-, and 14,15-EET, with both R,S and S,R stereochemistry. Preferentially produces 11R,12S-EET enantiomer. To a lesser extent, catalyzes the hydroxylation of arachidonic acid producing hydroxyeicosatetraenoates (HETEs). Metabolizes eicosapentaenoic acid (EPA, C20:5(n-3)) to epoxyeicosatetraenoic acid (EETeTr) regioisomers, 8,9-, 11,12-, 14,15-, and 17,18-EETeTr, preferentially producing 17R,18S-EETeTr enantiomer. Mechanistically, uses molecular oxygen inserting one oxygen atom into a substrate, and reducing the second into a water molecule, with two electrons provided by NADPH via cytochrome P450 reductase (NADPH--hemoprotein reductase). This chain is Cytochrome P450 2C11 (Cyp2c11), found in Rattus norvegicus (Rat).